We begin with the raw amino-acid sequence, 459 residues long: Chromosomal replication initiator protein DnaA (459 aa).

Residues 1-90 (MAVSLWQQCI…RPASKPAAPA (90 aa)) are domain I, interacts with DnaA modulators. Residues 75–124 (RFDIGSRPASKPAAPAASTKSPVAPAAKSPSKPSFNSNEPAATANHRSNM) are disordered. The segment covering 80–108 (SRPASKPAAPAASTKSPVAPAAKSPSKPS) has biased composition (low complexity). The domain II stretch occupies residues 91 to 122 (ASTKSPVAPAAKSPSKPSFNSNEPAATANHRS). The segment covering 109–124 (FNSNEPAATANHRSNM) has biased composition (polar residues). The interval 123 to 339 (NMNPTYQFDN…GALNRVIANA (217 aa)) is domain III, AAA+ region. ATP-binding residues include G167, G169, K170, and T171. Residues 340–459 (NFTGRPITID…YANLIRTLSS (120 aa)) form a domain IV, binds dsDNA region.

The protein belongs to the DnaA family. As to quaternary structure, oligomerizes as a right-handed, spiral filament on DNA at oriC.

It localises to the cytoplasm. Its function is as follows. Plays an essential role in the initiation and regulation of chromosomal replication. ATP-DnaA binds to the origin of replication (oriC) to initiate formation of the DNA replication initiation complex once per cell cycle. Binds the DnaA box (a 9 base pair repeat at the origin) and separates the double-stranded (ds)DNA. Forms a right-handed helical filament on oriC DNA; dsDNA binds to the exterior of the filament while single-stranded (ss)DNA is stabiized in the filament's interior. The ATP-DnaA-oriC complex binds and stabilizes one strand of the AT-rich DNA unwinding element (DUE), permitting loading of DNA polymerase. After initiation quickly degrades to an ADP-DnaA complex that is not apt for DNA replication. Binds acidic phospholipids. This chain is Chromosomal replication initiator protein DnaA, found in Shewanella loihica (strain ATCC BAA-1088 / PV-4).